A 929-amino-acid chain; its full sequence is Isoleucine--tRNA ligase (929 aa).

The 'HIGH' region motif lies at 58–68 (PYANGDIHIGH). Residue Glu-563 coordinates L-isoleucyl-5'-AMP. The 'KMSKS' region signature appears at 605–609 (KMSKS). Lys-608 serves as a coordination point for ATP. Zn(2+) is bound by residues Cys-892, Cys-895, Cys-912, and Cys-915.

It belongs to the class-I aminoacyl-tRNA synthetase family. IleS type 1 subfamily. As to quaternary structure, monomer. The cofactor is Zn(2+).

The protein resides in the cytoplasm. The catalysed reaction is tRNA(Ile) + L-isoleucine + ATP = L-isoleucyl-tRNA(Ile) + AMP + diphosphate. In terms of biological role, catalyzes the attachment of isoleucine to tRNA(Ile). As IleRS can inadvertently accommodate and process structurally similar amino acids such as valine, to avoid such errors it has two additional distinct tRNA(Ile)-dependent editing activities. One activity is designated as 'pretransfer' editing and involves the hydrolysis of activated Val-AMP. The other activity is designated 'posttransfer' editing and involves deacylation of mischarged Val-tRNA(Ile). In Neisseria gonorrhoeae (strain NCCP11945), this protein is Isoleucine--tRNA ligase.